The following is a 224-amino-acid chain: MKIYGVYMDRPLSAGEEDRMMAAVSAEKREKCRRFYHKEDAHRTLIGDMLIRTAAAKAYGLDPAGISFGVQEYGKPYIPALPDMHFNISHSGRWIVCAVDSKPIGIDIEKMKPGTIDIAKRFFSPTEYSDLQAKHPDQQTDYFYHLWSMKESFIKQAGKGLSLPLDSFSVRLKDDGHVSIELPDGHEPCFIRTYDADEEYKLAVCAAHPDFCDGIEMKTYEELL.

Residues D107, E109, and E151 each coordinate Mg(2+). The tract at residues 158 to 189 is peptidyl carrier protein binding; sequence GKGLSLPLDSFSVRLKDDGHVSIELPDGHEPC.

It belongs to the P-Pant transferase superfamily. Gsp/Sfp/HetI/AcpT family. Mg(2+) serves as cofactor.

The enzyme catalyses apo-[peptidyl-carrier protein] + CoA = holo-[peptidyl-carrier protein] + adenosine 3',5'-bisphosphate + H(+). Its function is as follows. May activate the peptidyl carrier protein (PCP) domains of surfactin synthetase SRF1/2/3 and iturin A synthetase, by transferring the 4'-phosphopantetheinyl moiety of coenzyme A (CoA) to a serine residue. Required for the coproduction of the lipopeptide antibiotics, iturin A and surfactin. In Bacillus subtilis, this protein is 4'-phosphopantetheinyl transferase (lpa-14).